Reading from the N-terminus, the 420-residue chain is Gamma-glutamyl phosphate reductase (420 aa).

The protein belongs to the gamma-glutamyl phosphate reductase family.

It is found in the cytoplasm. It catalyses the reaction L-glutamate 5-semialdehyde + phosphate + NADP(+) = L-glutamyl 5-phosphate + NADPH + H(+). Its pathway is amino-acid biosynthesis; L-proline biosynthesis; L-glutamate 5-semialdehyde from L-glutamate: step 2/2. In terms of biological role, catalyzes the NADPH-dependent reduction of L-glutamate 5-phosphate into L-glutamate 5-semialdehyde and phosphate. The product spontaneously undergoes cyclization to form 1-pyrroline-5-carboxylate. The protein is Gamma-glutamyl phosphate reductase of Neisseria meningitidis serogroup B (strain ATCC BAA-335 / MC58).